Consider the following 543-residue polypeptide: Sodium-dependent lysophosphatidylcholine symporter 1 (543 aa).

Over residues 1 to 14 (MAKGEGAESGSAAG) the composition is skewed to low complexity. Positions 1-34 (MAKGEGAESGSAAGLLPTSILQSTERPAQVKKEP) are disordered. The Cytoplasmic portion of the chain corresponds to 1-40 (MAKGEGAESGSAAGLLPTSILQSTERPAQVKKEPKKKKQQ). Residues 41 to 70 (LSVCNKLCYALGGAPYQVTGCALGFFLQIY) form a helical membrane-spanning segment. At 71-94 (LLDVAQKDEEVVFCFSSFQVGPFS) the chain is on the extracellular side. Residues 95–115 (ASIILFVGRAWDAITDPLVGL) form a helical membrane-spanning segment. Residues 116–127 (CISKSPWTCLGR) are Cytoplasmic-facing. The chain crosses the membrane as a helical span at residues 128–147 (LMPWIIFSTPLAVIAYFLIW). At 148–157 (FVPDFPHGQT) the chain is on the extracellular side. Residues 158–182 (YWYLLFYCLFETMVTCFHVPYSALT) form a helical membrane-spanning segment. At 183 to 189 (MFISTEQ) the chain is on the cytoplasmic side. Residues 190–221 (TERDSATAYRMTVEVLGTVLGTAIQGQIVGQA) form a helical membrane-spanning segment. The Extracellular segment spans residues 222 to 241 (DTPCFQDLNSSTVASQSANH). An intrachain disulfide couples Cys225 to Cys473. N-linked (GlcNAc...) asparagine glycans are attached at residues Asn230 and Asn240. Residues 242 to 275 (THGTTSHRETQKAYLLAAGVIVCIYIICAVILIL) traverse the membrane as a helical segment. Residues 276–306 (GVREQREPYEAQQSEPIAYFRGLRLVMSHGP) lie on the Cytoplasmic side of the membrane. The helical transmembrane segment at 307-333 (YIKLITGFLFTSLAFMLVEGNFVLFCT) threads the bilayer. Residues 334–344 (YTLGFRNEFQN) lie on the Extracellular side of the membrane. A helical membrane pass occupies residues 345–363 (LLLAIMLSATLTIPIWQWF). Topologically, residues 364 to 367 (LTRF) are cytoplasmic. Residues 368-389 (GKKTAVYVGISSAVPFLILVAL) traverse the membrane as a helical segment. The Extracellular segment spans residues 390–392 (MES). The helical transmembrane segment at 393–429 (NLIITYAVAVAAGISVAAAFLLPWSMLPDVIDDFHLK) threads the bilayer. Residues 430 to 439 (QPHFHGTEPI) lie on the Cytoplasmic side of the membrane. A helical membrane pass occupies residues 440–466 (FFSFYVFFTKFASGVSLGISTLSLDFA). The Extracellular segment spans residues 467–478 (GYQTRGCSQPER). The helical transmembrane segment at 479–502 (VKFTLNMLVTMAPIVLILLGLLLF) threads the bilayer. The Cytoplasmic segment spans residues 503–543 (KMYPIDEERRRQNKKALQALRDEASSSGCSETDSTELASIL).

It belongs to the major facilitator superfamily. As to quaternary structure, interacts with ERVFRD-1/syncytin-2. In placenta, associated with trophoblast cells.

The protein resides in the cell membrane. Its subcellular location is the endoplasmic reticulum membrane. It carries out the reaction a 1-acyl-sn-glycero-3-phosphocholine(in) + Na(+)(in) = a 1-acyl-sn-glycero-3-phosphocholine(out) + Na(+)(out). It catalyses the reaction 1-(4Z,7Z,10Z,13Z,16Z,19Z-docosahexaenoyl)-sn-glycero-3-phosphocholine(in) + Na(+)(in) = 1-(4Z,7Z,10Z,13Z,16Z,19Z-docosahexaenoyl)-sn-glycero-3-phosphocholine(out) + Na(+)(out). The catalysed reaction is 1-(9Z-octadecenoyl)-sn-glycero-3-phosphocholine(in) + Na(+)(in) = 1-(9Z-octadecenoyl)-sn-glycero-3-phosphocholine(out) + Na(+)(out). The enzyme catalyses 1-hexadecanoyl-sn-glycero-3-phosphocholine(in) + Na(+)(in) = 1-hexadecanoyl-sn-glycero-3-phosphocholine(out) + Na(+)(out). It carries out the reaction a 1-acyl-sn-glycero-3-phosphoethanolamine(in) + Na(+)(in) = a 1-acyl-sn-glycero-3-phosphoethanolamine(out) + Na(+)(out). Functionally, sodium-dependent lysophosphatidylcholine (LPC) symporter, which plays an essential role for blood-brain barrier formation and function. Specifically expressed in endothelium of the blood-brain barrier of micro-vessels and transports LPC into the brain. Transport of LPC is essential because it constitutes the major mechanism by which docosahexaenoic acid (DHA), an omega-3 fatty acid that is essential for normal brain growth and cognitive function, enters the brain. Transports LPC carrying long-chain fatty acids such LPC oleate and LPC palmitate with a minimum acyl chain length of 14 carbons. Does not transport docosahexaenoic acid in unesterified fatty acid. Specifically required for blood-brain barrier formation and function, probably by mediating lipid transport. Not required for central nervous system vascular morphogenesis. Acts as a transporter for tunicamycin, an inhibitor of asparagine-linked glycosylation. In placenta, acts as a receptor for ERVFRD-1/syncytin-2 and is required for trophoblast fusion. This Homo sapiens (Human) protein is Sodium-dependent lysophosphatidylcholine symporter 1.